We begin with the raw amino-acid sequence, 105 residues long: UPF0166 protein aq_450 (105 aa).

This sequence belongs to the UPF0166 family.

The protein is UPF0166 protein aq_450 of Aquifex aeolicus (strain VF5).